The chain runs to 160 residues: Anaerobic nitrite reductase HBII (160 aa).

One can recognise a Globin domain in the interval 8–157; sequence GFTEEQEALV…LVAAIKLEMK (150 aa). Residues 41–45 carry the Homodimerization motif; sequence EIAPS. Heme b-binding residues include Ser-51, Lys-65, His-69, Lys-99, Ser-103, and His-104. The Homodimerization signature appears at 111-123; it reads DEHFEVTKFALLE.

It belongs to the plant globin family. Homodimer. It depends on heme b as a cofactor.

It localises to the cytoplasm. It is found in the nucleus. The catalysed reaction is Fe(III)-heme b-[protein] + nitric oxide + H2O = Fe(II)-heme b-[protein] + nitrite + 2 H(+). Phytoglobin that reduces nitrite to nitric oxide (NO) under anoxic conditions (e.g. during flooding or in waterlogged soil) and upon root nodulation. Required for general plant development and during nodulation, especially for the onset of symbiosis. Monitors nitric oxide (NO) levels during early phase of the nitrogen-fixing symbiosis and buffers oxygen in functioning nodules. May not function as an oxygen storage or transport protein. Has an unusually high affinity for O(2) through a hexacoordinate heme iron because of a very low dissociation constant. The polypeptide is Anaerobic nitrite reductase HBII (Casuarina glauca (Swamp oak)).